A 1306-amino-acid polypeptide reads, in one-letter code: Angiotensin-converting enzyme (1306 aa).

Positions 1–29 (MGAASGRRGPGLLLPLPLLLLLPPQPALA) are cleaved as a signal peptide. Topologically, residues 30 to 1256 (LDPGLQPGNF…GLDLDAQQAR (1227 aa)) are extracellular. N-linked (GlcNAc...) asparagine glycosylation is found at asparagine 38, asparagine 54, asparagine 74, glutamate 103, asparagine 111, isoleucine 121, tyrosine 140, asparagine 146, and asparagine 160. Peptidase M2 domains lie at 40–624 (SADE…LGWP) and 643–1222 (VTDE…LGWP). A disulfide bond links cysteine 157 and cysteine 165. Tyrosine 231 contacts chloride. 2 N-linked (GlcNAc...) asparagine glycosylation sites follow: asparagine 318 and asparagine 368. Cysteine 359 and cysteine 377 are joined by a disulfide. Position 390 (histidine 390) interacts with Zn(2+). The Proton acceptor 1 role is filled by glutamate 391. The Zn(2+) site is built by histidine 394, proline 414, glutamate 418, and arginine 442. Residues asparagine 445 and asparagine 509 are each glycosylated (N-linked (GlcNAc...) asparagine). The active-site Proton donor 1 is the histidine 520. Arginine 529 contributes to the chloride binding site. Residues cysteine 545 and cysteine 557 are joined by a disulfide bond. Asparagine 617 and asparagine 677 each carry an N-linked (GlcNAc...) asparagine glycan. Asparagine 695 and asparagine 714 each carry an N-linked (GlcNAc...) (complex) asparagine glycan. A disulfide bridge links cysteine 757 with cysteine 763. Asparagine 760 carries N-linked (GlcNAc...) asparagine; partial glycosylation. Chloride-binding residues include arginine 791 and tyrosine 829. Residue asparagine 942 is glycosylated (N-linked (GlcNAc...) asparagine; partial). A disulfide bridge connects residues cysteine 957 and cysteine 975. Histidine 988 contacts Zn(2+). Glutamate 989 (proton acceptor 2) is an active-site residue. The Zn(2+) site is built by histidine 992 and glutamate 1016. Chloride-binding residues include tryptophan 1090 and arginine 1094. Catalysis depends on histidine 1118, which acts as the Proton donor 2. Arginine 1127 serves as a coordination point for chloride. The cysteines at positions 1143 and 1155 are disulfide-linked. Asparagine 1191 carries N-linked (GlcNAc...) asparagine; partial glycosylation. Residues 1215–1256 (HGEKLGWPQYNWTPNSARSEGPLPDSGRVSFLGLDLDAQQAR) form a juxtamembrane stalk region. Residues 1257 to 1277 (VGQWLLLFLGIALLVATLGLS) traverse the membrane as a helical segment. Over 1278–1306 (QRLFSIRHRSLHRHSHGPQFGSEVELRHS) the chain is Cytoplasmic. A Phosphoserine modification is found at serine 1299.

The protein belongs to the peptidase M2 family. Monomer and homodimer; homodimerizes following binding to an inhibitor. Interacts with calmodulin (CALM1, CALM2 or CALM3); interaction takes place in the cytoplasmic region and regulates phosphorylation and proteolytic cleavage. The cofactor is Zn(2+). Chloride serves as cofactor. Produced following proteolytic cleavage by secretase enzymes that cleave the transmembrane form in the juxtamembrane stalk region upstream of the transmembrane region. Cleavage can take place at different sites of the juxtamembrane stalk region. In terms of processing, phosphorylated by CK2 on Ser-1299; which allows membrane retention. Phosphorylated on tyrosine residues on its extracellular part, promoting cleavage by secretase enzymes and formation of the soluble form (Angiotensin-converting enzyme, soluble form). In terms of tissue distribution, ubiquitously expressed, with highest levels in lung, kidney, heart, gastrointestinal system and prostate. As to expression, specifically expressed in spermatocytes and adult testis.

The protein localises to the cell membrane. The protein resides in the cytoplasm. It is found in the secreted. The catalysed reaction is Release of a C-terminal dipeptide, oligopeptide-|-Xaa-Yaa, when Xaa is not Pro, and Yaa is neither Asp nor Glu. Thus, conversion of angiotensin I to angiotensin II, with increase in vasoconstrictor activity, but no action on angiotensin II.. The enzyme catalyses angiotensin I + H2O = L-histidyl-L-leucine + angiotensin II. It catalyses the reaction bradykinin + H2O = L-Phe-L-Arg + bradykinin(1-7). It carries out the reaction substance P + H2O = substance P(1-9) + L-Leu-L-Met-NH2. The catalysed reaction is substance P + H2O = substance P(1-8) + Gly-L-Leu-L-Met-NH2. The enzyme catalyses substance P + H2O = L-Phe-L-Phe-Gly-L-Leu-L-Met-NH2 + substance P(1-6). It catalyses the reaction neurotensin + H2O = neurotensin(1-11) + L-isoleucyl-L-leucine. It carries out the reaction goralatide + H2O = N-acetyl-L-seryl-L-aspartate + L-lysyl-L-proline. The catalysed reaction is Met-enkephalin + H2O = L-phenylalanyl-L-methionine + L-tyrosylglycylglycine. The enzyme catalyses Leu-enkephalin + H2O = L-tyrosylglycylglycine + L-phenylalanyl-L-leucine. It catalyses the reaction Met-enkephalin-Arg-Phe + H2O = L-arginyl-L-phenylalanine + Met-enkephalin. With respect to regulation, the dipeptidyl carboxypeptidase activity is strongly activated by chloride. The dipeptidyl carboxypeptidase activity is specifically inhibited by lisinopril, captopril and enalaprilat. Strongly inhibited by lisinopril and captopril. Dipeptidyl carboxypeptidase that removes dipeptides from the C-terminus of a variety of circulating hormones, such as angiotensin I, bradykinin or enkephalins, thereby playing a key role in the regulation of blood pressure, electrolyte homeostasis or synaptic plasticity. Composed of two similar catalytic domains, each possessing a functional active site, with different selectivity for substrates. Plays a major role in the angiotensin-renin system that regulates blood pressure and sodium retention by the kidney by converting angiotensin I to angiotensin II, resulting in an increase of the vasoconstrictor activity of angiotensin. Also able to inactivate bradykinin, a potent vasodilator, and therefore enhance the blood pressure response. Acts as a regulator of synaptic transmission by mediating cleavage of neuropeptide hormones, such as substance P, neurotensin or enkephalins. Catalyzes degradation of different enkephalin neuropeptides (Met-enkephalin, Leu-enkephalin, Met-enkephalin-Arg-Phe and possibly Met-enkephalin-Arg-Gly-Leu). Acts as a regulator of synaptic plasticity in the nucleus accumbens of the brain by mediating cleavage of Met-enkephalin-Arg-Phe, a strong ligand of Mu-type opioid receptor OPRM1, into Met-enkephalin. Met-enkephalin-Arg-Phe cleavage by ACE decreases activation of OPRM1, leading to long-term synaptic potentiation of glutamate release. Also acts as a regulator of hematopoietic stem cell differentiation by mediating degradation of hemoregulatory peptide N-acetyl-SDKP (AcSDKP). Acts as a regulator of cannabinoid signaling pathway by mediating degradation of hemopressin, an antagonist peptide of the cannabinoid receptor CNR1. Involved in amyloid-beta metabolism by catalyzing degradation of Amyloid-beta protein 40 and Amyloid-beta protein 42 peptides, thereby preventing plaque formation. Catalyzes cleavage of cholecystokinin (maturation of Cholecystokinin-8 and Cholecystokinin-5) and Gonadoliberin-1 (both maturation and degradation) hormones. Degradation of hemoregulatory peptide N-acetyl-SDKP (AcSDKP) and amyloid-beta proteins is mediated by the N-terminal catalytic domain, while angiotensin I and cholecystokinin cleavage is mediated by the C-terminal catalytic region. In terms of biological role, soluble form that is released in blood plasma and other body fluids following proteolytic cleavage in the juxtamembrane stalk region. Its function is as follows. Isoform produced by alternative promoter usage that is specifically expressed in spermatocytes and adult testis, and which is required for male fertility. In contrast to somatic isoforms, only contains one catalytic domain. Acts as a dipeptidyl carboxypeptidase that removes dipeptides from the C-terminus of substrates. The identity of substrates that are needed for male fertility is unknown. May also have a glycosidase activity which releases GPI-anchored proteins from the membrane by cleaving the mannose linkage in the GPI moiety. The GPIase activity was reported to be essential for the egg-binding ability of the sperm. This activity is however unclear and has been challenged by other groups, suggesting that it may be indirect. This chain is Angiotensin-converting enzyme, found in Homo sapiens (Human).